Here is an 807-residue protein sequence, read N- to C-terminus: AP-5 complex subunit zeta-1 (807 aa).

Probably part of the adaptor protein complex 5 (AP-5) a tetramer composed of AP5B1, AP5M1, AP5S1 and AP5Z1. Interacts with ZFYVE26 and SPG11.

Its subcellular location is the cytoplasm. The protein resides in the nucleus. Functionally, as part of AP-5, a probable fifth adaptor protein complex it may be involved in endosomal transport. According to PubMed:20613862 it is a putative helicase required for efficient homologous recombination DNA double-strand break repair. The chain is AP-5 complex subunit zeta-1 (AP5Z1) from Homo sapiens (Human).